Reading from the N-terminus, the 338-residue chain is tRNA-specific 2-thiouridylase MnmA (338 aa).

Residues 6–13 (LMSGGIDS) and M32 each bind ATP. The Nucleophile role is filled by C87. A disulfide bridge links C87 with C185. Residue G111 coordinates ATP. Residues 135-137 (KDQ) form an interaction with tRNA region. C185 serves as the catalytic Cysteine persulfide intermediate. Positions 288 to 289 (RY) are interaction with tRNA.

It belongs to the MnmA/TRMU family.

Its subcellular location is the cytoplasm. The catalysed reaction is S-sulfanyl-L-cysteinyl-[protein] + uridine(34) in tRNA + AH2 + ATP = 2-thiouridine(34) in tRNA + L-cysteinyl-[protein] + A + AMP + diphosphate + H(+). Catalyzes the 2-thiolation of uridine at the wobble position (U34) of tRNA, leading to the formation of s(2)U34. In Syntrophomonas wolfei subsp. wolfei (strain DSM 2245B / Goettingen), this protein is tRNA-specific 2-thiouridylase MnmA.